A 528-amino-acid chain; its full sequence is Peptide chain release factor 3 (528 aa).

The 269-residue stretch at 11-279 (SRRRTFAIIS…GLVDWAPSPQ (269 aa)) folds into the tr-type G domain. GTP contacts are provided by residues 20–27 (SHPDAGKT), 88–92 (DTPGH), and 142–145 (NKLD).

This sequence belongs to the TRAFAC class translation factor GTPase superfamily. Classic translation factor GTPase family. PrfC subfamily.

Its subcellular location is the cytoplasm. Increases the formation of ribosomal termination complexes and stimulates activities of RF-1 and RF-2. It binds guanine nucleotides and has strong preference for UGA stop codons. It may interact directly with the ribosome. The stimulation of RF-1 and RF-2 is significantly reduced by GTP and GDP, but not by GMP. The polypeptide is Peptide chain release factor 3 (Pseudoalteromonas atlantica (strain T6c / ATCC BAA-1087)).